A 271-amino-acid polypeptide reads, in one-letter code: Methylcorrinoid:tetrahydrofolate methyltransferase (271 aa).

A Pterin-binding domain is found at 1–247; sequence MIIIGEKLNG…GAIFATDALL (247 aa).

The protein belongs to the vitamin-B12 dependent methionine synthase family. In terms of assembly, the proline betaine:THF methyl transfer system is composed of two methyltransferases, MtpB and MtqA, and the corrinoid protein MtqC. The L-carnitine:THF methyl transfer system is composed of two methyltransferases, MtcB and MtqA, and the corrinoid protein MtqC.

It catalyses the reaction methyl-Co(III)-[quaternary-amine-specific corrinoid protein] + (6S)-5,6,7,8-tetrahydrofolate = Co(I)-[quaternary-amine-specific corrinoid protein] + (6S)-5-methyl-5,6,7,8-tetrahydrofolate + H(+). In terms of biological role, involved in the degradation of the quaternary amines L-proline betaine and L-carnitine. Component of a corrinoid-dependent methyltransferase system that transfers a methyl group from L-proline betaine or L-carnitine to tetrahydrofolate (THF), forming methyl-THF, a key intermediate in the Wood-Ljungdahl acetogenesis pathway. MtqA catalyzes the transfer of a methyl group from the methylated corrinoid protein MtqC to THF, forming methyl-THF. This Eubacterium limosum protein is Methylcorrinoid:tetrahydrofolate methyltransferase.